Reading from the N-terminus, the 151-residue chain is ALK and LTK ligand 2 (151 aa).

The first 25 residues, 1 to 25 (MRVSGRPMLLALLLLLSTVGDPGHA), serve as a signal peptide directing secretion. Disulfide bonds link cysteine 112–cysteine 148 and cysteine 126–cysteine 135.

It belongs to the ALKAL family. Homodimer.

The protein resides in the secreted. Its subcellular location is the cell membrane. In terms of biological role, cytokine that acts as a physiological ligand for receptor tyrosine kinases LTK and ALK, leading to their activation. Cytokine-binding is sufficient to activate LTK. In contrast, ALKAL2-driven activation of ALK is coupled with heparin-binding to ALK. Stimulation of ALK signaling is involved in neural development and regulation of energy expenditure. This chain is ALK and LTK ligand 2, found in Rattus norvegicus (Rat).